The primary structure comprises 105 residues: Pyrimidine/purine nucleoside phosphorylase (105 aa).

It belongs to the nucleoside phosphorylase PpnP family.

The catalysed reaction is a purine D-ribonucleoside + phosphate = a purine nucleobase + alpha-D-ribose 1-phosphate. The enzyme catalyses adenosine + phosphate = alpha-D-ribose 1-phosphate + adenine. It catalyses the reaction cytidine + phosphate = cytosine + alpha-D-ribose 1-phosphate. It carries out the reaction guanosine + phosphate = alpha-D-ribose 1-phosphate + guanine. The catalysed reaction is inosine + phosphate = alpha-D-ribose 1-phosphate + hypoxanthine. The enzyme catalyses thymidine + phosphate = 2-deoxy-alpha-D-ribose 1-phosphate + thymine. It catalyses the reaction uridine + phosphate = alpha-D-ribose 1-phosphate + uracil. It carries out the reaction xanthosine + phosphate = alpha-D-ribose 1-phosphate + xanthine. In terms of biological role, catalyzes the phosphorolysis of diverse nucleosides, yielding D-ribose 1-phosphate and the respective free bases. Can use uridine, adenosine, guanosine, cytidine, thymidine, inosine and xanthosine as substrates. Also catalyzes the reverse reactions. The polypeptide is Pyrimidine/purine nucleoside phosphorylase (Acidovorax ebreus (strain TPSY) (Diaphorobacter sp. (strain TPSY))).